Reading from the N-terminus, the 89-residue chain is DNA-directed RNA polymerase subunit omega (89 aa).

This sequence belongs to the RNA polymerase subunit omega family. In terms of assembly, the RNAP catalytic core consists of 2 alpha, 1 beta, 1 beta' and 1 omega subunit. When a sigma factor is associated with the core the holoenzyme is formed, which can initiate transcription.

The catalysed reaction is RNA(n) + a ribonucleoside 5'-triphosphate = RNA(n+1) + diphosphate. Its function is as follows. Promotes RNA polymerase assembly. Latches the N- and C-terminal regions of the beta' subunit thereby facilitating its interaction with the beta and alpha subunits. This Clavibacter michiganensis subsp. michiganensis (strain NCPPB 382) protein is DNA-directed RNA polymerase subunit omega.